Here is a 291-residue protein sequence, read N- to C-terminus: N-acetylmannosamine kinase (291 aa).

Residues 5-12 and 132-139 each bind ATP; these read AIDIGGTK and GVGGGVVC. Residues His156, Cys166, Cys168, and Cys173 each coordinate Zn(2+).

It belongs to the ROK (NagC/XylR) family. NanK subfamily. In terms of assembly, homodimer.

The catalysed reaction is an N-acyl-D-mannosamine + ATP = an N-acyl-D-mannosamine 6-phosphate + ADP + H(+). The protein operates within amino-sugar metabolism; N-acetylneuraminate degradation; D-fructose 6-phosphate from N-acetylneuraminate: step 2/5. Catalyzes the phosphorylation of N-acetylmannosamine (ManNAc) to ManNAc-6-P. The sequence is that of N-acetylmannosamine kinase from Salmonella agona (strain SL483).